The primary structure comprises 270 residues: Formamidopyrimidine-DNA glycosylase (270 aa).

The active-site Schiff-base intermediate with DNA is the proline 2. Residue glutamate 3 is the Proton donor of the active site. The Proton donor; for beta-elimination activity role is filled by lysine 58. Histidine 91, arginine 110, and arginine 151 together coordinate DNA. The FPG-type zinc-finger motif lies at arginine 236–arginine 270. Arginine 260 acts as the Proton donor; for delta-elimination activity in catalysis.

It belongs to the FPG family. Monomer. Zn(2+) is required as a cofactor.

It catalyses the reaction Hydrolysis of DNA containing ring-opened 7-methylguanine residues, releasing 2,6-diamino-4-hydroxy-5-(N-methyl)formamidopyrimidine.. It carries out the reaction 2'-deoxyribonucleotide-(2'-deoxyribose 5'-phosphate)-2'-deoxyribonucleotide-DNA = a 3'-end 2'-deoxyribonucleotide-(2,3-dehydro-2,3-deoxyribose 5'-phosphate)-DNA + a 5'-end 5'-phospho-2'-deoxyribonucleoside-DNA + H(+). Involved in base excision repair of DNA damaged by oxidation or by mutagenic agents. Acts as a DNA glycosylase that recognizes and removes damaged bases. Has a preference for oxidized purines, such as 7,8-dihydro-8-oxoguanine (8-oxoG). Has AP (apurinic/apyrimidinic) lyase activity and introduces nicks in the DNA strand. Cleaves the DNA backbone by beta-delta elimination to generate a single-strand break at the site of the removed base with both 3'- and 5'-phosphates. This is Formamidopyrimidine-DNA glycosylase from Thiobacillus denitrificans (strain ATCC 25259 / T1).